A 181-amino-acid chain; its full sequence is Adenine phosphoribosyltransferase (181 aa).

The protein belongs to the purine/pyrimidine phosphoribosyltransferase family. Homodimer.

The protein resides in the cytoplasm. The catalysed reaction is AMP + diphosphate = 5-phospho-alpha-D-ribose 1-diphosphate + adenine. It functions in the pathway purine metabolism; AMP biosynthesis via salvage pathway; AMP from adenine: step 1/1. Its function is as follows. Catalyzes a salvage reaction resulting in the formation of AMP, that is energically less costly than de novo synthesis. The polypeptide is Adenine phosphoribosyltransferase (Shewanella woodyi (strain ATCC 51908 / MS32)).